Here is a 463-residue protein sequence, read N- to C-terminus: tRNA dimethylallyltransferase 9 (463 aa).

Position 57–64 (57–64 (GPTGAGKS)) interacts with ATP. A substrate-binding site is contributed by 59–64 (TGAGKS). Residues 82-85 (DSVQ) are interaction with substrate tRNA.

Belongs to the IPP transferase family. It depends on Mg(2+) as a cofactor. Expressed ubiquitously, with highest expression in proliferating tissues.

The protein resides in the cytoplasm. The catalysed reaction is adenosine(37) in tRNA + dimethylallyl diphosphate = N(6)-dimethylallyladenosine(37) in tRNA + diphosphate. Catalyzes the transfer of a dimethylallyl group onto the adenine at position 37 in tRNAs that read codons beginning with uridine, leading to the formation of N6-(dimethylallyl)adenosine (i(6)A). Involved in the cis-type cytokinin biosynthesis. This is tRNA dimethylallyltransferase 9 (IPT9) from Arabidopsis thaliana (Mouse-ear cress).